Reading from the N-terminus, the 398-residue chain is Mannitol-1-phosphate 5-dehydrogenase (398 aa).

10 to 21 is an NAD(+) binding site; sequence AVHFGAGNIGRG. Lysine 221 is a catalytic residue.

The protein belongs to the mannitol dehydrogenase family. As to quaternary structure, monomer.

It catalyses the reaction D-mannitol 1-phosphate + NAD(+) = beta-D-fructose 6-phosphate + NADH + H(+). Catalyzes the NAD(H)-dependent interconversion of D-fructose 6-phosphate and D-mannitol 1-phosphate in the mannitol metabolic pathway. This is Mannitol-1-phosphate 5-dehydrogenase from Neurospora crassa (strain ATCC 24698 / 74-OR23-1A / CBS 708.71 / DSM 1257 / FGSC 987).